Consider the following 643-residue polypeptide: Threonine--tRNA ligase (643 aa).

Residues 1 to 62 (MSFSVTLPDG…DEDVEAAIIT (62 aa)) form the TGS domain. A catalytic region spans residues 239–537 (DHRTIGRDLD…LTEIYKGAFP (299 aa)). Residues Cys-333, His-384, and His-514 each coordinate Zn(2+).

It belongs to the class-II aminoacyl-tRNA synthetase family. As to quaternary structure, homodimer. Requires Zn(2+) as cofactor.

The protein resides in the cytoplasm. The catalysed reaction is tRNA(Thr) + L-threonine + ATP = L-threonyl-tRNA(Thr) + AMP + diphosphate + H(+). Its function is as follows. Catalyzes the attachment of threonine to tRNA(Thr) in a two-step reaction: L-threonine is first activated by ATP to form Thr-AMP and then transferred to the acceptor end of tRNA(Thr). Also edits incorrectly charged L-seryl-tRNA(Thr). This chain is Threonine--tRNA ligase, found in Lactobacillus gasseri (strain ATCC 33323 / DSM 20243 / BCRC 14619 / CIP 102991 / JCM 1131 / KCTC 3163 / NCIMB 11718 / NCTC 13722 / AM63).